A 305-amino-acid polypeptide reads, in one-letter code: MGARDFLTLEGCDRGELREILELAAGCEAGRMDGALAGKTVCLAFFEASTRTAVSFELAARRCGADVISLSERGSSISKGESLVDTVVTLDRLGADAIVLRHPAAGAARLAARFAAAAVVNAGDGCGQHPTQALLDLYSLSRSVGGFEELAGVRAAVVGDILHSRVARSVIPAFRAAGVELALVAPRTLLPVEAGVWGLPVLSSVDEALEWGASVLYMLRLQRERMTGARVPSVAEYARYYAVGRRHLEAGVRVMHPGPVNRGVEIAGDVVLDGASLIPDQVAAGVAVRSAVLALATGVAQEVAA.

2 residues coordinate carbamoyl phosphate: R51 and T52. K79 serves as a coordination point for L-aspartate. R101, H129, and Q132 together coordinate carbamoyl phosphate. 2 residues coordinate L-aspartate: R165 and R220. Positions 258 and 259 each coordinate carbamoyl phosphate.

It belongs to the aspartate/ornithine carbamoyltransferase superfamily. ATCase family. Heterododecamer (2C3:3R2) of six catalytic PyrB chains organized as two trimers (C3), and six regulatory PyrI chains organized as three dimers (R2).

The catalysed reaction is carbamoyl phosphate + L-aspartate = N-carbamoyl-L-aspartate + phosphate + H(+). It functions in the pathway pyrimidine metabolism; UMP biosynthesis via de novo pathway; (S)-dihydroorotate from bicarbonate: step 2/3. Functionally, catalyzes the condensation of carbamoyl phosphate and aspartate to form carbamoyl aspartate and inorganic phosphate, the committed step in the de novo pyrimidine nucleotide biosynthesis pathway. The protein is Aspartate carbamoyltransferase catalytic subunit of Rubrobacter xylanophilus (strain DSM 9941 / JCM 11954 / NBRC 16129 / PRD-1).